The sequence spans 507 residues: Glycerol kinase (507 aa).

Residue Thr15 participates in ADP binding. Positions 15, 16, and 17 each coordinate ATP. Thr15 contacts sn-glycerol 3-phosphate. An ADP-binding site is contributed by Arg19. The sn-glycerol 3-phosphate site is built by Arg85, Glu86, Tyr137, and Asp250. Arg85, Glu86, Tyr137, Asp250, and Gln251 together coordinate glycerol. Positions 272, 316, and 418 each coordinate ADP. Residues Thr272, Gly316, and Gly418 each coordinate ATP.

It belongs to the FGGY kinase family.

It carries out the reaction glycerol + ATP = sn-glycerol 3-phosphate + ADP + H(+). It functions in the pathway polyol metabolism; glycerol degradation via glycerol kinase pathway; sn-glycerol 3-phosphate from glycerol: step 1/1. Its activity is regulated as follows. Inhibited by fructose 1,6-bisphosphate (FBP). Its function is as follows. Key enzyme in the regulation of glycerol uptake and metabolism. Catalyzes the phosphorylation of glycerol to yield sn-glycerol 3-phosphate. This is Glycerol kinase from Malacoplasma penetrans (strain HF-2) (Mycoplasma penetrans).